We begin with the raw amino-acid sequence, 185 residues long: Small ribosomal subunit protein uS5 (185 aa).

Residues 18 to 81 (FVDKLVHINR…ESAKRALIRV (64 aa)) enclose the S5 DRBM domain.

This sequence belongs to the universal ribosomal protein uS5 family. As to quaternary structure, part of the 30S ribosomal subunit. Contacts proteins S4 and S8.

Its function is as follows. With S4 and S12 plays an important role in translational accuracy. Functionally, located at the back of the 30S subunit body where it stabilizes the conformation of the head with respect to the body. This Azorhizobium caulinodans (strain ATCC 43989 / DSM 5975 / JCM 20966 / LMG 6465 / NBRC 14845 / NCIMB 13405 / ORS 571) protein is Small ribosomal subunit protein uS5.